A 420-amino-acid chain; its full sequence is Mannose-1-phosphate guanylyltransferase regulatory subunit alpha (420 aa).

The substrate-binding domain stretch occupies residues Leu2–Ala251. Glu85 and Gln247 together coordinate GDP-alpha-D-mannose. The tract at residues Leu273–Leu420 is hexapeptide repeat domain. The C-loop stretch occupies residues Thr356–Ile384.

It belongs to the transferase hexapeptide repeat family. Component of the GMPPA-GMPPB mannose-1-phosphate guanylyltransferase complex composed of 4 GMPPA subunits and 8 GMPPB subunits; the complex is organized into three layers, a central layer made up of 2 GMPPA dimers sandwiched between two layers each made up of 2 GMPPB dimers. Expressed in the liver (at protein level).

It is found in the cytoplasm. Regulatory subunit of the GMPPA-GMPPB mannose-1-phosphate guanylyltransferase complex; reduces the catalytic activity of GMPPB when part of the complex. Mediates allosteric feedback inhibition of GMPPB catalytic activity upon binding GDP-alpha-D-mannose. Together with GMPPB regulates GDP-alpha-D-mannose levels. The polypeptide is Mannose-1-phosphate guanylyltransferase regulatory subunit alpha (GMPPA) (Sus scrofa (Pig)).